A 123-amino-acid polypeptide reads, in one-letter code: Heat-labile enterotoxin IIA, B chain (123 aa).

The signal sequence occupies residues 1 to 19 (MSSKKIIGAFVLMTGILSG). Residues Cys-33 and Cys-104 are joined by a disulfide bond.

Heterohexamer of one A chain and of five B chains.

Its function is as follows. The biological activity of the toxin is produced by the A chain, which activates intracellular adenyl cyclase. This chain is Heat-labile enterotoxin IIA, B chain, found in Escherichia coli.